The primary structure comprises 178 residues: Gamma-crystallin S (178 aa).

At S2 the chain carries N-acetylserine. The interval 2-5 (SKTG) is N-terminal arm. 2 consecutive Beta/gamma crystallin 'Greek key' domains span residues 6–44 (TKIT…KVEG) and 45–87 (GTWA…RAVH). The segment at 88-93 (LPSGGQ) is connecting peptide. 2 Beta/gamma crystallin 'Greek key' domains span residues 94-134 (YKIQ…KVLE) and 135-177 (GVWI…RRIV).

It belongs to the beta/gamma-crystallin family. Monomer.

Crystallins are the dominant structural components of the vertebrate eye lens. The protein is Gamma-crystallin S (CRYGS) of Homo sapiens (Human).